A 309-amino-acid chain; its full sequence is MSQERFPAAPKMSSEKPTSLDAMRATNPCETPIQLLHEFGTKTGNHPVYTLEKAEGQAHNPSFTFRLVIGDITSLGEGPSKKTAKQKAAEFALNILRGDTSKCLPVTDTLRDPKKPPNQMQENPVGSLQELAVQKGWRLPEYTVAQESGPPHKREFTITCRVETFVETGSGTSKQVAKRVAAEKLLTKFKTISTDNIPLNKLIGNKMGCTWDSMRNSSGEKISMLKRSPLSIPNTDYVKMLKDVAEELDFNLTYLDIDELSVNGQYQCLAELSTNPITVCHGTGISCGNAHNDAAHNALQYLKIMCIKK.

A disordered region spans residues 1–22; that stretch reads MSQERFPAAPKMSSEKPTSLDA. DRBM domains are found at residues 31–98, 123–191, and 236–304; these read TPIQ…ILRG, NPVG…KFKT, and DYVK…YLKI.

Belongs to the PRKRA family. In terms of assembly, homodimer. Interacts with dicer1 and eif2ak2/pkr. Also able to interact with dsRNA.

It localises to the cytoplasm. The protein resides in the perinuclear region. It is found in the nucleus. Activates eif2ak2/pkr in the absence of double-stranded RNA (dsRNA), leading to phosphorylation of eif2s1/efi2-alpha and inhibition of translation and induction of apoptosis. Required for siRNA production by dicer1 and for subsequent siRNA-mediated post-transcriptional gene silencing. Does not seem to be required for processing of pre-miRNA to miRNA by dicer1. This chain is Interferon-inducible double-stranded RNA-dependent protein kinase activator A homolog A (prkra-a), found in Xenopus laevis (African clawed frog).